The chain runs to 827 residues: Beta-galactosidase 2 (827 aa).

A signal peptide spans 1–24 (MAASAVAVAFVVAVAAVLAAAASA). Glutamate 182 serves as the catalytic Proton donor. Asparagine 209 carries N-linked (GlcNAc...) asparagine glycosylation. The Nucleophile role is filled by glutamate 251. A glycan (N-linked (GlcNAc...) asparagine) is linked at asparagine 458. The 87-residue stretch at 741 to 827 (DYEKAKVHLQ…KRAVVEAICG (87 aa)) folds into the SUEL-type lectin domain.

This sequence belongs to the glycosyl hydrolase 35 family.

The protein localises to the secreted. Its subcellular location is the extracellular space. The protein resides in the apoplast. It catalyses the reaction Hydrolysis of terminal non-reducing beta-D-galactose residues in beta-D-galactosides.. This Oryza sativa subsp. japonica (Rice) protein is Beta-galactosidase 2.